We begin with the raw amino-acid sequence, 235 residues long: Probable flavin-dependent thymidylate synthase (235 aa).

Residues 1–229 form the ThyX domain; it reads MKVQLIASTI…PNTYQDIPTE (229 aa). FAD contacts are provided by residues Ser70 and 93–95; that span reads RHR. Residues 90–93, 103–105, and Arg168 each bind dUMP; these read ELER and SQR. The ThyX motif signature appears at 93-103; it reads RHRHLSFSVVS. FAD is bound at residue 184-186; sequence NHR. Arg195 provides a ligand contact to dUMP. The active-site Involved in ionization of N3 of dUMP, leading to its activation is Arg195.

Belongs to the thymidylate synthase ThyX family. In terms of assembly, homotetramer. It depends on FAD as a cofactor.

It carries out the reaction dUMP + (6R)-5,10-methylene-5,6,7,8-tetrahydrofolate + NADPH + H(+) = dTMP + (6S)-5,6,7,8-tetrahydrofolate + NADP(+). The protein operates within pyrimidine metabolism; dTTP biosynthesis. Catalyzes the reductive methylation of 2'-deoxyuridine-5'-monophosphate (dUMP) to 2'-deoxythymidine-5'-monophosphate (dTMP) while utilizing 5,10-methylenetetrahydrofolate (mTHF) as the methyl donor, and NADPH and FADH(2) as the reductant. In Mycobacterium (Mycobacteriophage D29), this protein is Probable flavin-dependent thymidylate synthase (48).